The primary structure comprises 196 residues: MYLIPTVIEQTNRGERAYDIYSRLLKDRIVFLGSPIDDQVANSIVSQLLFLAAEDPDKDISLYINSPGGSITAGLAIYDTMQFIKPDVSTICIGMAASMGAFLLAAGAKGKRFALPNSEIMIHQPLGGAQGQATEIEIAAKRILFLRDKLNRILSENTGQPIEVIERDTDRDNFMTAQKAMEYGIIDRVLTRADEK.

The active-site Nucleophile is S98. Residue H123 is part of the active site.

Belongs to the peptidase S14 family. In terms of assembly, fourteen ClpP subunits assemble into 2 heptameric rings which stack back to back to give a disk-like structure with a central cavity, resembling the structure of eukaryotic proteasomes.

The protein resides in the cytoplasm. The enzyme catalyses Hydrolysis of proteins to small peptides in the presence of ATP and magnesium. alpha-casein is the usual test substrate. In the absence of ATP, only oligopeptides shorter than five residues are hydrolyzed (such as succinyl-Leu-Tyr-|-NHMec, and Leu-Tyr-Leu-|-Tyr-Trp, in which cleavage of the -Tyr-|-Leu- and -Tyr-|-Trp bonds also occurs).. Cleaves peptides in various proteins in a process that requires ATP hydrolysis. Has a chymotrypsin-like activity. Plays a major role in the degradation of misfolded proteins. ClpXP is involved in the complete degradation of the Site-2 clipped anti-sigma-W factor RsiW. This results in the release of SigW and the transcription activation of the genes under the control of the sigma-W factor. The protein is ATP-dependent Clp protease proteolytic subunit of Geobacillus kaustophilus (strain HTA426).